The primary structure comprises 373 residues: Pulmonary surfactant-associated protein B (373 aa).

Positions 1–22 (MAKSHLLPWLLLLPILCGPGTA) are cleaved as a signal peptide. The propeptide occupies 23–187 (AAITYSLACA…PQTQDLSEQL (165 aa)). Positions 24 to 64 (AITYSLACAQGPEFWCQSLEQALQCRALGHCLQEVWGHVEA) constitute a Saposin A-type domain. Saposin B-type domains follow at residues 64 to 146 (ADDL…KPRH), 191 to 268 (PIPY…SSED), and 287 to 362 (QDSD…AAPF). 9 disulfide bridges follow: cysteine 68-cysteine 142, cysteine 71-cysteine 136, cysteine 99-cysteine 111, cysteine 195-cysteine 264, cysteine 198-cysteine 258, cysteine 222-cysteine 233, cysteine 291-cysteine 358, cysteine 294-cysteine 352, and cysteine 317-cysteine 327. An N-linked (GlcNAc...) asparagine glycan is attached at asparagine 73. Positions 267–373 (EDSAGPALPA…PLQCVHSPHF (107 aa)) are excised as a propeptide. N-linked (GlcNAc...) asparagine glycosylation occurs at asparagine 303.

As to quaternary structure, homodimer; disulfide-linked.

The protein resides in the secreted. The protein localises to the extracellular space. It localises to the surface film. Pulmonary surfactant-associated proteins promote alveolar stability by lowering the surface tension at the air-liquid interface in the peripheral air spaces. SP-B increases the collapse pressure of palmitic acid to nearly 70 millinewtons per meter. In Bos taurus (Bovine), this protein is Pulmonary surfactant-associated protein B (SFTPB).